The chain runs to 314 residues: Taste receptor type 2 member 42 (314 aa).

The Extracellular segment spans residues 1-7; that stretch reads MATEMDK. The chain crosses the membrane as a helical span at residues 8 to 28; that stretch reads IFLTLATVEFIIGMLGNVFIG. The Cytoplasmic segment spans residues 29–50; it reads LVNCSEGIKNQKVFSVDFILTC. Residues 51-71 form a helical membrane-spanning segment; that stretch reads LAISTIGHLLVILFDSCVVGL. Topologically, residues 72-101 are extracellular; that stretch reads APHLYATDRVRRPVTMLWHMXNHLTTWLAT. The chain crosses the membrane as a helical span at residues 102-122; it reads CLSIFYFFKIAHFPHSLFLWL. Residues 123–127 are Cytoplasmic-facing; that stretch reads RWRMN. The chain crosses the membrane as a helical span at residues 128 to 148; sequence RVIAILLTLSLFLLIFDCLVL. At 149 to 187 the chain is on the extracellular side; it reads EMFIDXSLNIIDKSNLTLYLDESKTPYDKLSLLKILLSL. N-linked (GlcNAc...) asparagine glycosylation is present at Asn163. Residues 188–208 form a helical membrane-spanning segment; the sequence is NSFIPFSLCLTSLLFLFLSLV. Topologically, residues 209-238 are cytoplasmic; that stretch reads RHTRNLKLSSLGSRDSSTEAHRRAMKMVMS. The chain crosses the membrane as a helical span at residues 239 to 259; the sequence is LLFLFIVHFFSLQVANWTFCI. Over 260 to 265 the chain is Extracellular; the sequence is LGNNKY. Residues 266-286 traverse the membrane as a helical segment; sequence TQFVTLALHAFPSCHSFILIL. The Cytoplasmic portion of the chain corresponds to 287–314; sequence GNSKLRQTAVRLLWHLRNYTKRPNPLPL.

It belongs to the G-protein coupled receptor T2R family.

The protein resides in the membrane. Its function is as follows. Receptor that may play a role in the perception of bitterness and is gustducin-linked. May play a role in sensing the chemical composition of the gastrointestinal content. The activity of this receptor may stimulate alpha gustducin, mediate PLC-beta-2 activation and lead to the gating of TRPM5. The protein is Taste receptor type 2 member 42 (TAS2R42) of Macaca mulatta (Rhesus macaque).